Consider the following 137-residue polypeptide: Bet1-like protein At4g14600 (137 aa).

The Cytoplasmic segment spans residues 1–113; the sequence is MASNPHRSGA…MSIIRSGNNH (113 aa). In terms of domain architecture, t-SNARE coiled-coil homology spans 43 to 105; the sequence is DPMHSDLDDE…KNNIRKLNMS (63 aa). The chain crosses the membrane as a helical; Anchor for type IV membrane protein span at residues 114–134; it reads IMHVVLFALLVFFVLYIWSKM. The Vesicular segment spans residues 135–137; sequence FKR.

The protein belongs to the BET1 family.

It is found in the golgi apparatus membrane. It localises to the endoplasmic reticulum membrane. In terms of biological role, required for vesicular transport from the ER to the Golgi complex. Functions as a SNARE associated with ER-derived vesicles. This is Bet1-like protein At4g14600 from Arabidopsis thaliana (Mouse-ear cress).